A 310-amino-acid chain; its full sequence is tRNA uridine(34) hydroxylase (310 aa).

The Rhodanese domain occupies 134-232 (DDPDTLLIDT…YFEEVSQTES (99 aa)). The active-site Cysteine persulfide intermediate is the C192.

This sequence belongs to the TrhO family.

It catalyses the reaction uridine(34) in tRNA + AH2 + O2 = 5-hydroxyuridine(34) in tRNA + A + H2O. Catalyzes oxygen-dependent 5-hydroxyuridine (ho5U) modification at position 34 in tRNAs. The protein is tRNA uridine(34) hydroxylase of Prochlorococcus marinus (strain MIT 9313).